We begin with the raw amino-acid sequence, 405 residues long: Protein held out wings (405 aa).

The 69-residue stretch at 142-210 folds into the KH domain; the sequence is YVPVREHPDF…HLSDDLHVLI (69 aa).

Homodimer. Interacts with Sxl; promoting nuclear retention of msl-2 transcripts. During embryogenesis, expression is seen in mesodermal precursors of somatic, visceral and pharyngeal muscle. Later in embryogenesis, expression is restricted to heart and muscle attachment sites of the epidermis. During onset of metamorphosis, expression is seen in muscle and muscle attachment cells.

The protein resides in the nucleus. Its function is as follows. RNA-binding protein involved in muscle development and dosage compensation. Vital role in steroid regulation of muscle development and to control heart rate. Required during embryogenesis, in late stages of somatic muscle development, for myotube migration and during metamorphosis for muscle reorganization. Required for integrin-mediated cell-adhesion in wing blade. Together with Sxl, acts as an inhibitor of dosage compensation in females by preventing production of msl-2 protein, an essential component of the MSL complex. Specifically binds to the 5'-UTR of msl-2 transcripts and cooperates with Sxl to promote nuclear retention of msl-2 mRNAs. The chain is Protein held out wings (how) from Drosophila melanogaster (Fruit fly).